The chain runs to 285 residues: Bifunctional protein FolD (285 aa).

NADP(+)-binding positions include glycine 165–serine 167 and serine 190.

The protein belongs to the tetrahydrofolate dehydrogenase/cyclohydrolase family. Homodimer.

It carries out the reaction (6R)-5,10-methylene-5,6,7,8-tetrahydrofolate + NADP(+) = (6R)-5,10-methenyltetrahydrofolate + NADPH. The enzyme catalyses (6R)-5,10-methenyltetrahydrofolate + H2O = (6R)-10-formyltetrahydrofolate + H(+). It participates in one-carbon metabolism; tetrahydrofolate interconversion. In terms of biological role, catalyzes the oxidation of 5,10-methylenetetrahydrofolate to 5,10-methenyltetrahydrofolate and then the hydrolysis of 5,10-methenyltetrahydrofolate to 10-formyltetrahydrofolate. The protein is Bifunctional protein FolD of Burkholderia multivorans (strain ATCC 17616 / 249).